Reading from the N-terminus, the 642-residue chain is Cysteine-rich receptor-like protein kinase 27 (642 aa).

The first 24 residues, 1–24, serve as a signal peptide directing secretion; the sequence is MASTSIMLSSFFSFFFLTFFVTYA. At 25–274 the chain is on the extracellular side; the sequence is QQNVTVHTIC…QGKSKDRSKT (250 aa). N-linked (GlcNAc...) asparagine glycosylation is found at asparagine 27, asparagine 40, asparagine 44, asparagine 70, asparagine 145, asparagine 173, and asparagine 258. Gnk2-homologous domains follow at residues 29–130 and 136–240; these read TVHT…SRII and PVPF…VYPF. Residues 275–295 traverse the membrane as a helical segment; that stretch reads LIFAVVPIVAIILGLVFLFIY. Topologically, residues 296 to 642 are cytoplasmic; the sequence is LKRRRKKKTL…DVSLTDLSAR (347 aa). Positions 333–620 constitute a Protein kinase domain; it reads FSLTNKIGEG…QLPKPSQPGF (288 aa). Residues 339-347 and lysine 361 contribute to the ATP site; that span reads IGEGGFGVV. At tyrosine 406 the chain carries Phosphotyrosine. Residue aspartate 458 is the Proton acceptor of the active site. Serine 462 is subject to Phosphoserine. Threonine 498 bears the Phosphothreonine mark. Position 506 is a phosphotyrosine (tyrosine 506).

Belongs to the protein kinase superfamily. Ser/Thr protein kinase family. CRK subfamily.

It is found in the membrane. The enzyme catalyses L-seryl-[protein] + ATP = O-phospho-L-seryl-[protein] + ADP + H(+). It catalyses the reaction L-threonyl-[protein] + ATP = O-phospho-L-threonyl-[protein] + ADP + H(+). The sequence is that of Cysteine-rich receptor-like protein kinase 27 (CRK27) from Arabidopsis thaliana (Mouse-ear cress).